Reading from the N-terminus, the 236-residue chain is Protein YIPF6 (236 aa).

Alanine 2 is subject to N-acetylalanine. Residues 2 to 84 (AEAEDSPGEQ…HVLYPRKSNA (83 aa)) lie on the Cytoplasmic side of the membrane. Serine 7 bears the Phosphoserine mark. Residues 85 to 105 (LLRDWDLWGPLILCVTLALML) traverse the membrane as a helical segment. The Lumenal segment spans residues 106–116 (QKSSIDGKNDG). The chain crosses the membrane as a helical span at residues 117–137 (GGPEFAEVFVIIWFGAVTITL). The Cytoplasmic segment spans residues 138–147 (NSKLLGGNIS). The helical transmembrane segment at 148–168 (FFQSLCVLGYCILPLNIAMLI) threads the bilayer. The Lumenal segment spans residues 169-185 (CRLLLLAGQGPINFMIR). Residues 186–206 (LFVVLLMFAWSVVASTAFLAD) traverse the membrane as a helical segment. The Cytoplasmic segment spans residues 207–213 (SQPPNRK). The chain crosses the membrane as a helical span at residues 214 to 234 (ALAVYPVFLFYFVISWMILTF). Topologically, residues 235 to 236 (TP) are lumenal.

It belongs to the YIP1 family. In terms of assembly, predominantly interacts with YIPF1 or YIPF2, but may also form a ternary complex with YIPF1 and YIPF2. This interaction may stabilize YIPF1 and YIPF2.

The protein localises to the golgi apparatus membrane. Its function is as follows. May be required for stable YIPF1 and YIPF2 protein expression. This Mus musculus (Mouse) protein is Protein YIPF6 (Yipf6).